Here is a 165-residue protein sequence, read N- to C-terminus: Pro-MCH (165 aa).

Positions 1-21 (MAKMSLSSYLLILTFSLFSQG) are cleaved as a signal peptide. Residues 68 to 88 (NDDSSFMNDEENKNSKNTGSK) are disordered. The residue at position 143 (isoleucine 143) is an Isoleucine amide. A disulfide bridge connects residues cysteine 153 and cysteine 162.

The protein belongs to the melanin-concentrating hormone family. Pro-MCH is processed differentially in the brain and in peripheral organs producing two neuropeptides; NEI and MCH. A third peptide, NGE, may also be produced. Preferential processing in neurons by prohormone convertase 2 (PC2) generates NEI. MCH is generated in neurons of the lateral hypothalmic area by several prohormone convertases including PC1/3, PC2 and PC5/6.

Its subcellular location is the secreted. Its function is as follows. MCH may act as a neurotransmitter or neuromodulator in a broad array of neuronal functions directed toward the regulation of goal-directed behavior, such as food intake, and general arousal. The protein is Pro-MCH (PMCH) of Canis lupus familiaris (Dog).